The primary structure comprises 628 residues: MFNLRNFDVIVVGAGHAGTEAAMASSRMGCKTLLLTQKISDLGALSCNPAIGGIGKSHLVKEIDALGGMMAKAIDYSGIQFRILNSSKGPAVRSTRAQADKILYHETVKKILKKQNNLLILEAEVKDLIFKNYSVVGVLTQNEINFYSRSVVLAAGTFLGGKIHIGLKSYSAGRIGDKSAIDLSVRLRELSLRVNRLKTGTPPRIDINTVNFNNLLIQNSDTPVPVFSFMGNVSHHPKQIPCYLTHTNEKTHEIIRKNLDKSPIYTGFLKGLGPRYCPSIEDKIVRFPDRKSHQVFLEPEGLSSIKVYPNGISTSLPIEVQEQIVASIKGLEKSKIIRPGYAIEYDFFDPKDLNLTLESKLIKGLFFAGQINGTTGYEEAASQGLLAGLNAALSSKNTEGWFPRRDQAYLGVLIDDLTTQGTEEPYRMFTSRAEYRLSLREDNADLRLTEIGRKLGLVNDSRWIRYNQKVLNIQTEMNRLKKNKISPISPDADILKKLYNISLIKEISMSELLKRPQIRYQDLQSLESFRTGIVDLEAIGQIENEIKYAGYIKRQSEEIERHLKNENTFLSSICDYNKIRGLSSEVVKKLNDYKPISIGQASRISGITPAAISILLIHLKKESYKHTL.

Position 13-18 (Gly-13–Gly-18) interacts with FAD. Residue Gly-273–Phe-287 coordinates NAD(+).

The protein belongs to the MnmG family. In terms of assembly, homodimer. Heterotetramer of two MnmE and two MnmG subunits. Requires FAD as cofactor.

It localises to the cytoplasm. In terms of biological role, NAD-binding protein involved in the addition of a carboxymethylaminomethyl (cmnm) group at the wobble position (U34) of certain tRNAs, forming tRNA-cmnm(5)s(2)U34. In Buchnera aphidicola subsp. Acyrthosiphon pisum (strain 5A), this protein is tRNA uridine 5-carboxymethylaminomethyl modification enzyme MnmG.